Consider the following 607-residue polypeptide: Condensin-2 complex subunit H2 (607 aa).

Threonine 19 carries the phosphothreonine modification. Phosphoserine occurs at positions 95, 231, 235, and 252. Disordered stretches follow at residues 211-312 (YPMS…WQSL) and 325-347 (KGKP…KRKG). Residues 254 to 263 (GEEDAEDGAE) show a composition bias toward acidic residues. At serine 494 the chain carries Phosphoserine.

It belongs to the CND2 H2 (condensin-2 subunit 2) family. As to quaternary structure, component of the condensin-2 complex, which contains the SMC2 and SMC4 heterodimer, and three non SMC subunits, NCAPG2, NCAPH2 and NCAPD3 that probably regulate the complex.

The protein resides in the nucleus. In terms of biological role, regulatory subunit of the condensin-2 complex, a complex that seems to provide chromosomes with an additional level of organization and rigidity and in establishing mitotic chromosome architecture. May promote the resolution of double-strand DNA catenanes (intertwines) between sister chromatids. Condensin-mediated compaction likely increases tension in catenated sister chromatids, providing directionality for type II topoisomerase-mediated strand exchanges toward chromatid decatenation. Required for decatenation of chromatin bridges at anaphase. Early in neurogenesis, may play an essential role to ensure accurate mitotic chromosome condensation in neuron stem cells, ultimately affecting neuron pool and cortex size. Seems to have lineage-specific role in T-cell development. In Mus musculus (Mouse), this protein is Condensin-2 complex subunit H2.